The sequence spans 276 residues: Large ribosomal subunit protein uL2 (276 aa).

Residues 219–276 (TVRGSVMNPNDHPHGGGEGKQPIGRKQQMTPWGKKARGIKTRDKKKASTSMIVRRRNG) are disordered. Positions 252 to 276 (KKARGIKTRDKKKASTSMIVRRRNG) are enriched in basic residues.

Belongs to the universal ribosomal protein uL2 family. Part of the 50S ribosomal subunit. Forms a bridge to the 30S subunit in the 70S ribosome.

Functionally, one of the primary rRNA binding proteins. Required for association of the 30S and 50S subunits to form the 70S ribosome, for tRNA binding and peptide bond formation. It has been suggested to have peptidyltransferase activity; this is somewhat controversial. Makes several contacts with the 16S rRNA in the 70S ribosome. This is Large ribosomal subunit protein uL2 from Acholeplasma laidlawii (strain PG-8A).